Here is a 99-residue protein sequence, read N- to C-terminus: Nucleoid-associated protein EbfC (99 aa).

Belongs to the YbaB/EbfC family. As to quaternary structure, homodimer.

It localises to the cytoplasm. It is found in the nucleoid. In terms of biological role, binds to DNA and alters its conformation. May be involved in regulation of gene expression, nucleoid organization and DNA protection. The protein is Nucleoid-associated protein EbfC of Borreliella afzelii (strain PKo) (Borrelia afzelii).